Reading from the N-terminus, the 212-residue chain is Putative 3-methyladenine DNA glycosylase (212 aa).

This sequence belongs to the DNA glycosylase MPG family.

The protein is Putative 3-methyladenine DNA glycosylase of Psychrobacter cryohalolentis (strain ATCC BAA-1226 / DSM 17306 / VKM B-2378 / K5).